We begin with the raw amino-acid sequence, 85 residues long: MAHKKAGGSTRNGRDSESKRLGVKIFGGQAIRAGNIIVRQRGTQFHPGFGVGIGKDHTLFAKVEGVVKFEVKGAFGRRYVSVVPA.

The disordered stretch occupies residues 1-20; the sequence is MAHKKAGGSTRNGRDSESKR.

This sequence belongs to the bacterial ribosomal protein bL27 family.

The chain is Large ribosomal subunit protein bL27 from Azotobacter vinelandii (strain DJ / ATCC BAA-1303).